The following is a 271-amino-acid chain: Transmembrane protein 150A (271 aa).

Topologically, residues 1–3 (MTG) are cytoplasmic. The chain crosses the membrane as a helical span at residues 4 to 24 (WIVLPISLTAFSIPGIWIVYA). Topologically, residues 25–75 (MAVMNHHVCPVENWTYNLTCTDDNTKAGTPKSCCTLEDVPLISKCGTYPPE) are extracellular. N-linked (GlcNAc...) asparagine glycans are attached at residues Asn37 and Asn41. A helical transmembrane segment spans residues 76–96 (SCLFSLIGNVGAFMVVIICLL). Over 97-108 (RYSQVIEISQRS) the chain is Cytoplasmic. The helical transmembrane segment at 109–129 (WLNTTALIAGCTNAAGLVMVG) threads the bilayer. The Extracellular portion of the chain corresponds to 130–140 (NFQVDYAKSLH). The helical transmembrane segment at 141 to 161 (YIGAGVAFPAGLLFVCLSSIL) threads the bilayer. Residues 162 to 182 (SYQLAASALDYWLGHLRVSLT) are Cytoplasmic-facing. Residues 183–203 (IVALISLVLTGVFFIQESFLM) traverse the membrane as a helical segment. Residues 204–205 (QH) are Extracellular-facing. A helical transmembrane segment spans residues 206-226 (LVAICEWIFVLDILVFYGTFA). Topologically, residues 227-271 (YEFGSVSTDTMMAALQSSAARSCKSPGSSSTSTQLHCNAERIAMI) are cytoplasmic.

The protein belongs to the DRAM/TMEM150 family.

It is found in the cell membrane. Regulates localization of phosphatidylinositol 4-kinase (PI4K) to the plasma membrane. This chain is Transmembrane protein 150A (tmem150a), found in Xenopus laevis (African clawed frog).